The primary structure comprises 569 residues: Glucose-6-phosphate isomerase, cytosolic 2A (569 aa).

Glu-360 functions as the Proton donor in the catalytic mechanism. Catalysis depends on residues His-391 and Lys-516.

This sequence belongs to the GPI family. In terms of assembly, homodimer.

The protein resides in the cytoplasm. The catalysed reaction is alpha-D-glucose 6-phosphate = beta-D-fructose 6-phosphate. It functions in the pathway carbohydrate degradation; glycolysis; D-glyceraldehyde 3-phosphate and glycerone phosphate from D-glucose: step 2/4. The protein is Glucose-6-phosphate isomerase, cytosolic 2A (PGIC2-A) of Clarkia lewisii (Farewell-to-spring).